We begin with the raw amino-acid sequence, 102 residues long: MYAVIRTGGKQYRVAEGDVVRIEKIAGDVGAEVTFTEILLVGGSESPKVGQPTVAGAKVVGKVLAQDKHRRVLHFRKEKEGWTRRRGHRQPYTEVKVTSIAG.

This sequence belongs to the bacterial ribosomal protein bL21 family. In terms of assembly, part of the 50S ribosomal subunit. Contacts protein L20.

Functionally, this protein binds to 23S rRNA in the presence of protein L20. This Myxococcus xanthus (strain DK1622) protein is Large ribosomal subunit protein bL21.